Here is a 350-residue protein sequence, read N- to C-terminus: S-adenosylmethionine:tRNA ribosyltransferase-isomerase (350 aa).

The protein belongs to the QueA family. As to quaternary structure, monomer.

The protein resides in the cytoplasm. It catalyses the reaction 7-aminomethyl-7-carbaguanosine(34) in tRNA + S-adenosyl-L-methionine = epoxyqueuosine(34) in tRNA + adenine + L-methionine + 2 H(+). It participates in tRNA modification; tRNA-queuosine biosynthesis. Transfers and isomerizes the ribose moiety from AdoMet to the 7-aminomethyl group of 7-deazaguanine (preQ1-tRNA) to give epoxyqueuosine (oQ-tRNA). This Vibrio parahaemolyticus serotype O3:K6 (strain RIMD 2210633) protein is S-adenosylmethionine:tRNA ribosyltransferase-isomerase.